The following is a 63-amino-acid chain: Large ribosomal subunit protein bL35 (63 aa).

Residues 1–15 (MPKIKTHRGAAKRFK) show a composition bias toward basic residues. Positions 1–26 (MPKIKTHRGAAKRFKQTAGGKWKGSH) are disordered.

This sequence belongs to the bacterial ribosomal protein bL35 family.

In Pelotomaculum thermopropionicum (strain DSM 13744 / JCM 10971 / SI), this protein is Large ribosomal subunit protein bL35.